The sequence spans 353 residues: Melanin-concentrating hormone receptor 1 (353 aa).

Residues 1 to 28 are disordered; the sequence is MDLEASLLPTGPNASNTSDGPDNLTSAG. Residues 1-45 are Extracellular-facing; the sequence is MDLEASLLPTGPNASNTSDGPDNLTSAGPPPRTGSISYVNIIMPS. Residues 12–26 show a composition bias toward polar residues; it reads PNASNTSDGPDNLTS. N-linked (GlcNAc...) asparagine glycosylation is found at Asn13, Asn16, and Asn23. The helical transmembrane segment at 46-66 threads the bilayer; the sequence is VFGTICLLGIIGNSMVIFAVV. At 67–79 the chain is on the cytoplasmic side; the sequence is KKSKLHWFSNVPD. Residues 80-100 form a helical membrane-spanning segment; that stretch reads IFIINLSVVDLLFLLGMPFMI. Residues 101 to 116 are Extracellular-facing; it reads HQLMGNGVWHFGETMC. Residues Cys116 and Cys194 are joined by a disulfide bond. The chain crosses the membrane as a helical span at residues 117–139; it reads TLITAMDANSQFTSTYILTAMAI. At 140 to 161 the chain is on the cytoplasmic side; the sequence is DRYLATVHPISSTRFRKPSVAT. Residues 162-182 traverse the membrane as a helical segment; it reads LVICLLWALSIISITPVWLYA. Topologically, residues 183–204 are extracellular; sequence RLIPFPGGTVGCGIRLPNPDTD. Residues 205–225 form a helical membrane-spanning segment; that stretch reads LYWFTLYQFFLAFALPFVVIT. The Cytoplasmic portion of the chain corresponds to 226-256; it reads AAYVRILQRMTSSVAPASQRSIRLRTKRVTR. The helical transmembrane segment at 257–277 threads the bilayer; sequence TAIAICLVFFVCWAPYYVLQL. The Extracellular segment spans residues 278–294; sequence TQLSISRPTLTFVYLYN. A helical membrane pass occupies residues 295–315; the sequence is AAISLGYANSCLNPFVYIVLC. Over 316 to 353 the chain is Cytoplasmic; sequence ETFRKRLVLSVKPAAQGQLRAVSNAQTAEEERTESKGT.

It belongs to the G-protein coupled receptor 1 family. In terms of assembly, interacts with NCDN.

It localises to the cell membrane. In terms of biological role, receptor for melanin-concentrating hormone, coupled to both G proteins that inhibit adenylyl cyclase and G proteins that activate phosphoinositide hydrolysis. The chain is Melanin-concentrating hormone receptor 1 from Sus scrofa (Pig).